The primary structure comprises 118 residues: uncharacterized protein (118 aa).

Residues 98-118 (KGKGNEGREEAEEPLEEPEEG) form a disordered region. Over residues 106–118 (EEAEEPLEEPEEG) the composition is skewed to acidic residues.

This sequence belongs to the UPF0440 family.

This is an uncharacterized protein from Pyrococcus abyssi (strain GE5 / Orsay).